We begin with the raw amino-acid sequence, 311 residues long: Alpha/beta hydrolase domain-containing protein 17C (311 aa).

The interval 48-67 (EAPASTAQQPPREEGSGEPA) is disordered. Active-site charge relay system residues include Ser193, Asp258, and His287.

It belongs to the AB hydrolase superfamily. ABHD17 family. In terms of processing, palmitoylated on cysteine residues located in a cysteine cluster at the N-terminus which promotes membrane localization.

The protein localises to the recycling endosome membrane. It is found in the cell projection. It localises to the dendritic spine. Its subcellular location is the postsynaptic density membrane. It catalyses the reaction S-hexadecanoyl-L-cysteinyl-[protein] + H2O = L-cysteinyl-[protein] + hexadecanoate + H(+). Functionally, hydrolyzes fatty acids from S-acylated cysteine residues in proteins. Has depalmitoylating activity towards NRAS. In Xenopus laevis (African clawed frog), this protein is Alpha/beta hydrolase domain-containing protein 17C.